The primary structure comprises 100 residues: Pancreatic trypsin inhibitor (100 aa).

A signal peptide spans 1–21 (MKMSRLCLSVALLVLLGTLAA). A propeptide spanning residues 22 to 35 (STPGCDTSNQAKAQ) is cleaved from the precursor. The region spanning 40–90 (CLEPPYTGPCKARIIRYFYNAKAGLCQTFVYGGCRAKRNNFKSAEDCMRTC) is the BPTI/Kunitz inhibitor domain. Intrachain disulfides connect C40–C90, C49–C73, and C65–C86. Positions 94-100 (IGPWENL) are excised as a propeptide.

It is found in the secreted. Its function is as follows. Inhibits trypsin, kallikrein, chymotrypsin, and plasmin. This Bos taurus (Bovine) protein is Pancreatic trypsin inhibitor.